Reading from the N-terminus, the 67-residue chain is Large ribosomal subunit protein uL29 (67 aa).

This sequence belongs to the universal ribosomal protein uL29 family.

This is Large ribosomal subunit protein uL29 from Staphylothermus marinus (strain ATCC 43588 / DSM 3639 / JCM 9404 / F1).